Here is a 319-residue protein sequence, read N- to C-terminus: uncharacterized protein (319 aa).

The MPN domain maps to 29-164; that stretch reads VNISSLALLK…LDAFRSVNPL (136 aa). Zn(2+) is bound by residues histidine 111, histidine 113, and aspartate 124. The JAMM motif motif lies at 111 to 124; it reads HSHPGFGCWLSSVD.

This sequence belongs to the peptidase M67A family.

This is an uncharacterized protein from Caenorhabditis elegans.